We begin with the raw amino-acid sequence, 313 residues long: Ribose 1,5-bisphosphate isomerase (313 aa).

Substrate is bound by residues 17-20 and arginine 57; that span reads RGAA. The Proton acceptor role is filled by cysteine 121. The active-site Proton donor is the aspartate 190. Residues 200 to 201 and lysine 226 contribute to the substrate site; that span reads NK.

The protein belongs to the eIF-2B alpha/beta/delta subunits family. R15P isomerase subfamily.

The catalysed reaction is alpha-D-ribose 1,5-bisphosphate = D-ribulose 1,5-bisphosphate. Catalyzes the isomerization of ribose 1,5-bisphosphate (R15P) to ribulose 1,5-bisphosphate (RuBP), the CO(2) acceptor and substrate for RubisCO. Functions in an archaeal AMP degradation pathway, together with AMP phosphorylase and RubisCO. The chain is Ribose 1,5-bisphosphate isomerase from Archaeoglobus fulgidus (strain ATCC 49558 / DSM 4304 / JCM 9628 / NBRC 100126 / VC-16).